The sequence spans 233 residues: Small ribosomal subunit protein uS2 (233 aa).

It belongs to the universal ribosomal protein uS2 family.

In Bacillus anthracis, this protein is Small ribosomal subunit protein uS2.